The following is a 419-amino-acid chain: Glutamate-1-semialdehyde 2,1-aminomutase (419 aa).

Lys259 carries the N6-(pyridoxal phosphate)lysine modification.

The protein belongs to the class-III pyridoxal-phosphate-dependent aminotransferase family. HemL subfamily. Pyridoxal 5'-phosphate serves as cofactor.

Its subcellular location is the cytoplasm. The catalysed reaction is (S)-4-amino-5-oxopentanoate = 5-aminolevulinate. Its pathway is porphyrin-containing compound metabolism; protoporphyrin-IX biosynthesis; 5-aminolevulinate from L-glutamyl-tRNA(Glu): step 2/2. The protein is Glutamate-1-semialdehyde 2,1-aminomutase (hemL) of Sulfurisphaera tokodaii (strain DSM 16993 / JCM 10545 / NBRC 100140 / 7) (Sulfolobus tokodaii).